A 171-amino-acid chain; its full sequence is Protein GrpE (171 aa).

A disordered region spans residues 1–22 (MNHEHPDIESQQSAADAAAAAG).

This sequence belongs to the GrpE family. Homodimer.

It localises to the cytoplasm. Participates actively in the response to hyperosmotic and heat shock by preventing the aggregation of stress-denatured proteins, in association with DnaK and GrpE. It is the nucleotide exchange factor for DnaK and may function as a thermosensor. Unfolded proteins bind initially to DnaJ; upon interaction with the DnaJ-bound protein, DnaK hydrolyzes its bound ATP, resulting in the formation of a stable complex. GrpE releases ADP from DnaK; ATP binding to DnaK triggers the release of the substrate protein, thus completing the reaction cycle. Several rounds of ATP-dependent interactions between DnaJ, DnaK and GrpE are required for fully efficient folding. The polypeptide is Protein GrpE (Stenotrophomonas maltophilia (strain R551-3)).